We begin with the raw amino-acid sequence, 244 residues long: 5-oxoprolinase subunit A (244 aa).

This sequence belongs to the LamB/PxpA family. In terms of assembly, forms a complex composed of PxpA, PxpB and PxpC.

It catalyses the reaction 5-oxo-L-proline + ATP + 2 H2O = L-glutamate + ADP + phosphate + H(+). Functionally, catalyzes the cleavage of 5-oxoproline to form L-glutamate coupled to the hydrolysis of ATP to ADP and inorganic phosphate. The chain is 5-oxoprolinase subunit A from Shigella sonnei (strain Ss046).